Consider the following 343-residue polypeptide: N-acetyl-gamma-glutamyl-phosphate reductase (343 aa).

Cys-149 is a catalytic residue.

It belongs to the NAGSA dehydrogenase family. Type 1 subfamily.

It is found in the cytoplasm. It catalyses the reaction N-acetyl-L-glutamate 5-semialdehyde + phosphate + NADP(+) = N-acetyl-L-glutamyl 5-phosphate + NADPH + H(+). It participates in amino-acid biosynthesis; L-arginine biosynthesis; N(2)-acetyl-L-ornithine from L-glutamate: step 3/4. In terms of biological role, catalyzes the NADPH-dependent reduction of N-acetyl-5-glutamyl phosphate to yield N-acetyl-L-glutamate 5-semialdehyde. The sequence is that of N-acetyl-gamma-glutamyl-phosphate reductase from Methanococcus maripaludis (strain C5 / ATCC BAA-1333).